Here is a 240-residue protein sequence, read N- to C-terminus: Leucyl/phenylalanyl-tRNA--protein transferase (240 aa).

The protein belongs to the L/F-transferase family.

The protein localises to the cytoplasm. It carries out the reaction N-terminal L-lysyl-[protein] + L-leucyl-tRNA(Leu) = N-terminal L-leucyl-L-lysyl-[protein] + tRNA(Leu) + H(+). The catalysed reaction is N-terminal L-arginyl-[protein] + L-leucyl-tRNA(Leu) = N-terminal L-leucyl-L-arginyl-[protein] + tRNA(Leu) + H(+). It catalyses the reaction L-phenylalanyl-tRNA(Phe) + an N-terminal L-alpha-aminoacyl-[protein] = an N-terminal L-phenylalanyl-L-alpha-aminoacyl-[protein] + tRNA(Phe). Functions in the N-end rule pathway of protein degradation where it conjugates Leu, Phe and, less efficiently, Met from aminoacyl-tRNAs to the N-termini of proteins containing an N-terminal arginine or lysine. The protein is Leucyl/phenylalanyl-tRNA--protein transferase of Maridesulfovibrio salexigens (strain ATCC 14822 / DSM 2638 / NCIMB 8403 / VKM B-1763) (Desulfovibrio salexigens).